The primary structure comprises 277 residues: MGTIESYLTNSYNYIIFNFKKLCIGGLMSAIVGAMSGVTTAFIDLFMERANYDIMHIIMSFLIYFGIIFIIGLIVSAIIGGYNVRIMKTTVEGLNVAPDWNNITDLLYRGILYIVGLVLLNIIFYFIPAILFVFGIFSLYISKIIGAFLIIISILIFIISVISLWLYSKLAEVNYSVKGFYGFFEFKEIFKMIGIRYIILVIIIAIINFIISLIVVLPLNIIDIFISYSALANSILTIIYISIKGISYALSTFVDFYLGVFSIRAVALYYKDRKGIT.

The next 7 helical transmembrane spans lie at 23–43 (CIGG…TAFI), 61–81 (FLIY…IIGG), 117–137 (LVLL…FGIF), 144–164 (IIGA…VISL), 197–217 (YIIL…IVVL), 221–241 (IIDI…IIYI), and 243–263 (IKGI…VFSI).

This sequence to M.jannaschii MJ1189.

The protein resides in the cell membrane. This is an uncharacterized protein from Methanocaldococcus jannaschii (strain ATCC 43067 / DSM 2661 / JAL-1 / JCM 10045 / NBRC 100440) (Methanococcus jannaschii).